Reading from the N-terminus, the 466-residue chain is Glycine--tRNA ligase (466 aa).

Arg104 and Glu178 together coordinate substrate. ATP-binding positions include 210–212 (RNE), 220–225 (FRTREF), 294–295 (EL), and 338–341 (GADR). Residue 225 to 229 (FEQME) coordinates substrate. 334-338 (EPSLG) is a binding site for substrate.

Belongs to the class-II aminoacyl-tRNA synthetase family. Homodimer.

It localises to the cytoplasm. The catalysed reaction is tRNA(Gly) + glycine + ATP = glycyl-tRNA(Gly) + AMP + diphosphate. Its function is as follows. Catalyzes the attachment of glycine to tRNA(Gly). This Geobacillus thermodenitrificans (strain NG80-2) protein is Glycine--tRNA ligase.